Consider the following 564-residue polypeptide: Multidrug resistance protein 1 (564 aa).

The Cytoplasmic segment spans residues 1–115 (MHYRFLRDSF…NPQNWPTLQK (115 aa)). A disordered region spans residues 60-101 (IDNQGEPNSSQSSSSNNTIVDNNNNNDNDVDGDKIVVTWDGD). Positions 67 to 86 (NSSQSSSSNNTIVDNNNNND) are enriched in low complexity. Residues 116-136 (AFFIFQISFLTTSVYMGSAVY) form a helical membrane-spanning segment. At 137-151 (TPGIEELMHDFGIGR) the chain is on the extracellular side. Residues 152-172 (VVATLPLTLFVIGYGVGPLVF) traverse the membrane as a helical segment. Residues 173–183 (SPMSENAIFGR) lie on the Cytoplasmic side of the membrane. Residues 184-204 (TSIYIITLFLFVILQIPTALV) form a helical membrane-spanning segment. The Extracellular segment spans residues 205-206 (NN). The chain crosses the membrane as a helical span at residues 207–227 (IAGLCILRFLGGFFASPCLAT). The Cytoplasmic portion of the chain corresponds to 228–242 (GGASVADVVKFWNLP). Residues 243 to 263 (VGLAAWSLGAVCGPSFGPFFG) form a helical membrane-spanning segment. The Extracellular segment spans residues 264 to 273 (SILTVKASWR). Residues 274–294 (WTFWFMCIISGFSFVMLCFTL) traverse the membrane as a helical segment. At 295-350 (PETFGKTLLYRKAKRLRAITGNDRITSEGEVENSKMTSHELIIDTLWRPLEITVME) the chain is on the cytoplasmic side. Residues 351 to 371 (PVVLLINIYIAMVYSILYLFF) traverse the membrane as a helical segment. At 372–390 (EVFPIYFVGVKHFTLVELG) the chain is on the extracellular side. A helical transmembrane segment spans residues 391–411 (TTYMSIVIGIVIAAFIYIPVI). Residues 412–428 (RQKFTKPILRQEQVFPE) lie on the Cytoplasmic side of the membrane. Residues 429 to 449 (VFIPIAIVGGILLTSGLFIFG) traverse the membrane as a helical segment. Over 450–455 (WSANRT) the chain is Extracellular. The N-linked (GlcNAc...) asparagine glycan is linked to Asn-453. Residues 456–476 (THWVGPLFGAATTASGAFLIF) form a helical membrane-spanning segment. Topologically, residues 477 to 503 (QTLFNFMGASFKPHYIASVFASNDLFR) are cytoplasmic. Residues 504 to 524 (SVIASVFPLFGAPLFDNLATP) traverse the membrane as a helical segment. Residues 525-528 (EYPV) lie on the Extracellular side of the membrane. Residues 529–549 (AWGSSVLGFITLVMIAIPVLF) form a helical membrane-spanning segment. Topologically, residues 550 to 564 (YLNGPKLRARSKYAN) are cytoplasmic.

It belongs to the major facilitator superfamily. CAR1 family.

Its subcellular location is the cell membrane. Functionally, plasma membrane multidrug efflux pump that confers resistance to numerous chemicals including azoles such as fluconazole, voriconazole, and benztriazoles, as well as to benomyl, cycloheximide, methotrexate, 4-nitroquinoline-N-oxide, sulfometuron methyl, cerulenin, and brefeldin A. The chain is Multidrug resistance protein 1 from Candida albicans (strain SC5314 / ATCC MYA-2876) (Yeast).